The chain runs to 37 residues: Large ribosomal subunit protein bL36 (37 aa).

It belongs to the bacterial ribosomal protein bL36 family.

This is Large ribosomal subunit protein bL36 from Idiomarina loihiensis (strain ATCC BAA-735 / DSM 15497 / L2-TR).